The sequence spans 152 residues: Deoxyuridine 5'-triphosphate nucleotidohydrolase (152 aa).

Substrate contacts are provided by residues 71–73, asparagine 84, 88–90, and lysine 98; these read RSG and LID.

This sequence belongs to the dUTPase family. Mg(2+) is required as a cofactor.

The catalysed reaction is dUTP + H2O = dUMP + diphosphate + H(+). It participates in pyrimidine metabolism; dUMP biosynthesis; dUMP from dCTP (dUTP route): step 2/2. Functionally, this enzyme is involved in nucleotide metabolism: it produces dUMP, the immediate precursor of thymidine nucleotides and it decreases the intracellular concentration of dUTP so that uracil cannot be incorporated into DNA. This chain is Deoxyuridine 5'-triphosphate nucleotidohydrolase, found in Legionella pneumophila subsp. pneumophila (strain Philadelphia 1 / ATCC 33152 / DSM 7513).